The primary structure comprises 208 residues: V-type ATP synthase subunit D (208 aa).

It belongs to the V-ATPase D subunit family.

Functionally, produces ATP from ADP in the presence of a proton gradient across the membrane. This chain is V-type ATP synthase subunit D, found in Chlamydia caviae (strain ATCC VR-813 / DSM 19441 / 03DC25 / GPIC) (Chlamydophila caviae).